A 482-amino-acid polypeptide reads, in one-letter code: Ubiquitin carboxyl-terminal hydrolase MINDY-1 (482 aa).

A disordered region spans residues 1–119; it reads MEQPQAECPA…RPQQLPQSPR (119 aa). The span at 21–66 shows a compositional bias: basic and acidic residues; the sequence is ESEKHEALSGPEKHPQDKDGADAAPEKHPQDKDGADAHGEAGKQKS. Over residues 82 to 94 the composition is skewed to pro residues; it reads CPPPEASSSPPGP. The segment covering 106 to 119 has biased composition (polar residues); sequence EACSRPQQLPQSPR. A Phosphoserine modification is found at Ser117. Catalysis depends on Cys151, which acts as the Nucleophile. Residue His333 is the Proton acceptor of the active site. The tract at residues 402–441 is ubiquitin-binding domain (UBD); sequence QVDQDYLIALSLQQQQQPQGMLGLSDLELAQQLQQEEYQQ. Low complexity predominate over residues 437 to 446; the sequence is EEYQQQQAVQ. The tract at residues 437–482 is disordered; the sequence is EEYQQQQAVQPVRTRAPSSPGRGATSGRPAGERRQRSKTESDCVLL. A Phosphoserine modification is found at Ser454. A compositionally biased stretch (basic and acidic residues) spans 466–482; that stretch reads AGERRQRSKTESDCVLL.

The protein belongs to the MINDY deubiquitinase family. FAM63 subfamily.

It carries out the reaction Thiol-dependent hydrolysis of ester, thioester, amide, peptide and isopeptide bonds formed by the C-terminal Gly of ubiquitin (a 76-residue protein attached to proteins as an intracellular targeting signal).. Functionally, hydrolase that can specifically remove 'Lys-48'-linked conjugated ubiquitin from proteins. Has exodeubiquitinase activity and has a preference for long polyubiquitin chains. May play a regulatory role at the level of protein turnover. This Rattus norvegicus (Rat) protein is Ubiquitin carboxyl-terminal hydrolase MINDY-1 (Mindy1).